The chain runs to 260 residues: DNA-binding protein RFXANK (260 aa).

Positions 1-79 are disordered; it reads MELTQPAEDL…STTLTNRQRG (79 aa). A compositionally biased stretch (acidic residues) spans 22–33; that stretch reads GDPEDPGEEAAD. A compositionally biased stretch (polar residues) spans 57-77; that stretch reads SVSSPQAGSSLKHSTTLTNRQ. 5 ANK repeats span residues 89-118, 123-152, 156-185, 189-218, and 222-251; these read LDSL…NLVN, RGFT…DPHI, ERES…DINI, NGGT…DLTT, and SGYT…KLFQ.

As to quaternary structure, forms homodimers. The RFX heterotetrameric complex consists of 2 molecules of RFX5 and one each of RFXAP and RFX-B/RFXANK; with each subunit representing a separate complementation group. Interacts (via ankyrin repeats) with RFX5 (via PxLPxI/L motif); the interaction is direct. RFX forms cooperative DNA binding complexes with X2BP and CBF/NF-Y. RFX associates with CIITA to form an active transcriptional complex. Interacts with RAF1. Interacts (via ankyrin repeats) with RFX7 (via PxLPxI/L motif). Post-translationally, phosphorylated by RAF1. Ubiquitous.

The protein resides in the cytoplasm. Its subcellular location is the nucleus. In terms of biological role, activates transcription from class II MHC promoters. Activation requires the activity of the MHC class II transactivator/CIITA. May regulate other genes in the cell. RFX binds the X1 box of MHC-II promoters. May also potentiate the activation of RAF1. Functionally, isoform 2 is not involved in the positive regulation of MHC class II genes. This is DNA-binding protein RFXANK (RFXANK) from Homo sapiens (Human).